Reading from the N-terminus, the 111-residue chain is Probable 4-amino-4-deoxy-L-arabinose-phosphoundecaprenol flippase subunit ArnE (111 aa).

3 consecutive transmembrane segments (helical) span residues Leu-38–Leu-58, Leu-61–Ala-81, and Pro-91–Ala-111. Positions Leu-40 to Ser-109 constitute an EamA domain.

It belongs to the ArnE family. In terms of assembly, heterodimer of ArnE and ArnF.

It is found in the cell inner membrane. The protein operates within bacterial outer membrane biogenesis; lipopolysaccharide biosynthesis. Translocates 4-amino-4-deoxy-L-arabinose-phosphoundecaprenol (alpha-L-Ara4N-phosphoundecaprenol) from the cytoplasmic to the periplasmic side of the inner membrane. The chain is Probable 4-amino-4-deoxy-L-arabinose-phosphoundecaprenol flippase subunit ArnE from Salmonella enteritidis PT4 (strain P125109).